Consider the following 328-residue polypeptide: Olfactory receptor 13A1 (328 aa).

Topologically, residues 1 to 43 (MKLWMESHLIVPETRPSPRMMSNQTLVTEFILQGFSEHPEYRV) are extracellular. An N-linked (GlcNAc...) asparagine glycan is attached at Asn-23. A helical transmembrane segment spans residues 44–64 (FLFSCFLFLYSGALTGNVLIT). At 65–72 (LAITFNPG) the chain is on the cytoplasmic side. Residues 73–93 (LHAPMYFFLLNLATMDIICTS) traverse the membrane as a helical segment. The Extracellular segment spans residues 94-117 (SIMPKALASLVSEESSISYGGCMA). A disulfide bridge connects residues Cys-115 and Cys-207. A helical transmembrane segment spans residues 118 to 138 (QLYFLTWAASSELLLLTVMAY). Over 139–157 (DRYAAICHPLHYSSMMSKV) the chain is Cytoplasmic. A helical transmembrane segment spans residues 158–178 (FCSGLATAVWLLCAVNTAIHT). Topologically, residues 179–215 (GLMLRLDFCGPNVIIHFFCEVPPLLLLSCSSTYVNGV) are extracellular. Residues 216-235 (MIVLADAFYGIVNFLMTIAS) form a helical membrane-spanning segment. Topologically, residues 236–255 (YGFIVSSILKVKTAWGRQKA) are cytoplasmic. A helical membrane pass occupies residues 256 to 276 (FSTCSSHLTVVCMYYTAVFYA). The Extracellular segment spans residues 277 to 289 (YISPVSGYSAGKS). The chain crosses the membrane as a helical span at residues 290-310 (KLAGLLYTVLSPTLNPLIYTL). The Cytoplasmic portion of the chain corresponds to 311 to 328 (RNKEVKAALRKLFPFFRN).

It belongs to the G-protein coupled receptor 1 family.

The protein localises to the cell membrane. Odorant receptor. The polypeptide is Olfactory receptor 13A1 (OR13A1) (Homo sapiens (Human)).